A 64-amino-acid polypeptide reads, in one-letter code: Large ribosomal subunit protein bL35 (64 aa).

This sequence belongs to the bacterial ribosomal protein bL35 family.

The protein is Large ribosomal subunit protein bL35 of Pseudomonas entomophila (strain L48).